Consider the following 227-residue polypeptide: Translation initiation factor 6 (227 aa).

It belongs to the eIF-6 family.

Its function is as follows. Binds to the 50S ribosomal subunit and prevents its association with the 30S ribosomal subunit to form the 70S initiation complex. This is Translation initiation factor 6 from Pyrococcus abyssi (strain GE5 / Orsay).